The primary structure comprises 122 residues: Ribonuclease P protein component (122 aa).

Belongs to the RnpA family. As to quaternary structure, consists of a catalytic RNA component (M1 or rnpB) and a protein subunit.

The catalysed reaction is Endonucleolytic cleavage of RNA, removing 5'-extranucleotides from tRNA precursor.. In terms of biological role, RNaseP catalyzes the removal of the 5'-leader sequence from pre-tRNA to produce the mature 5'-terminus. It can also cleave other RNA substrates such as 4.5S RNA. The protein component plays an auxiliary but essential role in vivo by binding to the 5'-leader sequence and broadening the substrate specificity of the ribozyme. The polypeptide is Ribonuclease P protein component (Roseiflexus castenholzii (strain DSM 13941 / HLO8)).